The sequence spans 405 residues: Farnesyl pyrophosphate synthase (405 aa).

Mg(2+) contacts are provided by Asp158 and Asp162. The DDXXD motif signature appears at 158–162 (DDLAD).

It belongs to the FPP/GGPP synthase family. Requires Mg(2+) as cofactor.

The catalysed reaction is isopentenyl diphosphate + (2E)-geranyl diphosphate = (2E,6E)-farnesyl diphosphate + diphosphate. The protein operates within pheromone biosynthesis. Farnesyl pyrophosphate synthase involved in murgantiol biosynthesis, a male-released aggregation pheromone, by catalyzing the formation of (2E,6E)-farnesyl diphosphate. In Murgantia histrionica (Harlequin bug), this protein is Farnesyl pyrophosphate synthase.